Here is a 210-residue protein sequence, read N- to C-terminus: Ribosomal RNA small subunit methyltransferase G (210 aa).

S-adenosyl-L-methionine-binding positions include G76, M81, 127-128, and R145; that span reads VE.

The protein belongs to the methyltransferase superfamily. RNA methyltransferase RsmG family.

It is found in the cytoplasm. It carries out the reaction guanosine(527) in 16S rRNA + S-adenosyl-L-methionine = N(7)-methylguanosine(527) in 16S rRNA + S-adenosyl-L-homocysteine. Specifically methylates the N7 position of guanine in position 527 of 16S rRNA. The sequence is that of Ribosomal RNA small subunit methyltransferase G from Acinetobacter baumannii (strain AB307-0294).